We begin with the raw amino-acid sequence, 961 residues long: Roundabout homolog 4 (961 aa).

A signal peptide spans 1–37 (MGQGEELRAAVDSGGMGLLGTKCPLPLLLLFIMGGKA). Ig-like C2-type domains follow at residues 42 to 142 (PQIL…ARLS) and 148 to 235 (EDFR…ARVS). 2 cysteine pairs are disulfide-bonded: Cys63–Cys125 and Cys169–Cys218. Asn211 and Asn257 each carry an N-linked (GlcNAc...) asparagine glycan. 2 consecutive Fibronectin type-III domains span residues 259–356 (TLLN…LPEQ) and 358–453 (PSAP…LEQA). Residues Asn371, Asn400, and Asn407 are each glycosylated (N-linked (GlcNAc...) asparagine). Low complexity predominate over residues 544–559 (SGSRDLSSSSSLSSRL). 2 disordered regions span residues 544-563 (SGSR…GVDP) and 600-634 (QTSS…SSDS). Residues 623–634 (TGTSSPWASSDS) show a composition bias toward polar residues. 2 N-linked (GlcNAc...) asparagine glycosylation sites follow: Asn691 and Asn723. Residues 726-810 (ELAARPLPPT…SLEEEDQDSV (85 aa)) are disordered. Residues 755-769 (LQAPSSDPLPAAPLS) are compositionally biased toward low complexity. The span at 770-783 (VLNSSRPSSPQASF) shows a compositional bias: polar residues. N-linked (GlcNAc...) asparagine glycans are attached at residues Asn772 and Asn793. Positions 784–801 (LSVPSPGSSNLSSSSLSS) are enriched in low complexity. At Ser823 the chain carries Phosphoserine.

This sequence belongs to the immunoglobulin superfamily. ROBO family. In terms of assembly, interacts with SLIT2 and ENAH.

Its function is as follows. Receptor for Slit proteins, at least for SLIT2, and seems to be involved in angiogenesis and vascular patterning. May mediate the inhibition of primary endothelial cell migration by Slit proteins. Involved in the maintenance of endothelial barrier organization and function. This chain is Roundabout homolog 4 (Robo4), found in Rattus norvegicus (Rat).